The following is a 396-amino-acid chain: Elongation factor Tu (396 aa).

One can recognise a tr-type G domain in the interval 10–206; it reads KPHVNIGTIG…AVDEYIPTPQ (197 aa). The G1 stretch occupies residues 19–26; the sequence is GHVDHGKT. 19–26 contributes to the GTP binding site; that stretch reads GHVDHGKT. Residue Thr26 participates in Mg(2+) binding. Residues 60-64 form a G2 region; the sequence is GITIS. The G3 stretch occupies residues 81–84; it reads DCPG. GTP-binding positions include 81-85 and 136-139; these read DCPGH and NKVD. The G4 stretch occupies residues 136-139; sequence NKVD. Residues 174–176 are G5; it reads SAL.

It belongs to the TRAFAC class translation factor GTPase superfamily. Classic translation factor GTPase family. EF-Tu/EF-1A subfamily. Monomer.

The protein resides in the cytoplasm. It carries out the reaction GTP + H2O = GDP + phosphate + H(+). Functionally, GTP hydrolase that promotes the GTP-dependent binding of aminoacyl-tRNA to the A-site of ribosomes during protein biosynthesis. This Stigmatella aurantiaca protein is Elongation factor Tu.